Consider the following 629-residue polypeptide: Phosphomethylpyrimidine synthase (629 aa).

Positions 1 to 13 are enriched in polar residues; sequence MTTKSKNAINLSD. Residues 1 to 22 form a disordered region; that stretch reads MTTKSKNAINLSDSAKVDEQSV. Residues N233, M262, Y291, H327, 347–349, 388–391, and E427 each bind substrate; these read SRG and DGLR. H431 provides a ligand contact to Zn(2+). Y454 contacts substrate. Residue H495 participates in Zn(2+) binding. Residues C575, C578, and C583 each contribute to the [4Fe-4S] cluster site.

It belongs to the ThiC family. As to quaternary structure, homodimer. The cofactor is [4Fe-4S] cluster.

The catalysed reaction is 5-amino-1-(5-phospho-beta-D-ribosyl)imidazole + S-adenosyl-L-methionine = 4-amino-2-methyl-5-(phosphooxymethyl)pyrimidine + CO + 5'-deoxyadenosine + formate + L-methionine + 3 H(+). It participates in cofactor biosynthesis; thiamine diphosphate biosynthesis. Its function is as follows. Catalyzes the synthesis of the hydroxymethylpyrimidine phosphate (HMP-P) moiety of thiamine from aminoimidazole ribotide (AIR) in a radical S-adenosyl-L-methionine (SAM)-dependent reaction. This Pseudomonas fluorescens (strain Pf0-1) protein is Phosphomethylpyrimidine synthase.